The sequence spans 730 residues: Catalase-peroxidase 1 (730 aa).

The tryptophyl-tyrosyl-methioninium (Trp-Tyr) (with M-243) cross-link spans 92 to 217 (WHSAGTYRTT…LGAAVMGLIY (126 aa)). His93 functions as the Proton acceptor in the catalytic mechanism. Positions 217–243 (YVDPEGPNGNPDPLASAENIRESFGRM) form a cross-link, tryptophyl-tyrosyl-methioninium (Tyr-Met) (with W-92). Residue His258 participates in heme b binding.

It belongs to the peroxidase family. Peroxidase/catalase subfamily. Homodimer or homotetramer. Heme b is required as a cofactor. Post-translationally, formation of the three residue Trp-Tyr-Met cross-link is important for the catalase, but not the peroxidase activity of the enzyme.

The catalysed reaction is H2O2 + AH2 = A + 2 H2O. It carries out the reaction 2 H2O2 = O2 + 2 H2O. Functionally, bifunctional enzyme with both catalase and broad-spectrum peroxidase activity. The protein is Catalase-peroxidase 1 of Haloarcula marismortui (strain ATCC 43049 / DSM 3752 / JCM 8966 / VKM B-1809) (Halobacterium marismortui).